Reading from the N-terminus, the 691-residue chain is Solute carrier family 28 member 3 (691 aa).

Positions 1–78 are disordered; the sequence is MELRSTAAPR…HMEDDDEEMQ (78 aa). The Cytoplasmic portion of the chain corresponds to 1-102; sequence MELRSTAAPR…FCRKHKTTLR (102 aa). The span at 21–30 shows a compositional bias: low complexity; that stretch reads NEENFLENEN. Over residues 31–42 the composition is skewed to polar residues; sequence TSGNNSIRSRAV. Residues 43–54 are compositionally biased toward basic and acidic residues; sequence QSREHTNTKQDE. The chain crosses the membrane as a helical span at residues 103–123; the sequence is HIIWGILLAGYLVMVISACVL. The Extracellular portion of the chain corresponds to 124-128; the sequence is NFHRA. A helical transmembrane segment spans residues 129–149; it reads LPLFVITVAAIFFVVWDHLMA. At 150 to 173 the chain is on the cytoplasmic side; the sequence is KYEHRIDEMLSPGRRLLNSHWFWL. The chain crosses the membrane as a helical span at residues 174–194; it reads KWVIWSSLVLAVIFWLAFDTA. At 195–197 the chain is on the extracellular side; sequence KLG. Residues 198-219 form a helical membrane-spanning segment; sequence QQQLVSFGGLIMYIVLLFLFSK. Residues 220–227 lie on the Cytoplasmic side of the membrane; that stretch reads YPTRVYWR. The helical transmembrane segment at 228–247 threads the bilayer; sequence PVLWGIGLQFLLGLLILRTD. Topologically, residues 248–284 are extracellular; it reads PGFIAFDWLGRQVQTFLEYTDAGASFVFGEKYKDHFF. Residues 285–305 form a helical membrane-spanning segment; that stretch reads AFKVLPIVVFFSTVMSMLYYL. Over 306 to 329 the chain is Cytoplasmic; it reads GLMQWIIRKVGWIMLVTTGSSPIE. Residues 330–348 constitute an intramembrane region (helical); sequence SVVASGNIFVGQTESPLLV. Topologically, residues 349-361 are cytoplasmic; it reads RPYLPYITKSELH. The chain crosses the membrane as a helical span at residues 362–384; it reads AIMTAGFSTIAGSVLGAYISFGV. Residues 385–386 lie on the Extracellular side of the membrane; that stretch reads PS. The helical transmembrane segment at 387-408 threads the bilayer; the sequence is SHLLTASVMSAPASLAAAKLFW. Over 409–443 the chain is Cytoplasmic; that stretch reads PETEKPKITLKNAMKMESGDSGNLLEAATQGASSS. A helical membrane pass occupies residues 444 to 469; that stretch reads ISLVANIAVNLIAFLALLSFMNSALS. Residues 470-507 are Extracellular-facing; the sequence is WFGNMFDYPQLSFELICSYIFMPFSFMMGVEWQDSFMV. The segment at residues 508-527 is an intramembrane region (helical); it reads ARLIGYKTFFNEFVAYEHLS. Topologically, residues 528 to 566 are extracellular; sequence KWIHLRKEGGPKFVNGVQQYISIRSEIIATYALCGFANI. Residues 567–577 form a helical membrane-spanning segment; the sequence is GSLGIVIGGLT. Over 578–590 the chain is Cytoplasmic; that stretch reads SMAPSRKRDIASG. The chain crosses the membrane as a helical span at residues 591 to 613; that stretch reads AVRALIAGTVACFMTACIAGILS. At 614-691 the chain is on the extracellular side; that stretch reads STPVDINCHH…FNCNGISNTF (78 aa).

The protein belongs to the concentrative nucleoside transporter (CNT) (TC 2.A.41) family. Homotrimer. Expressed in pancreas, bone marrow, trachea, mammary gland, liver, prostate, and regions of intestine, brain, lung, placenta, testis, kidney, and heart.

The protein resides in the cell membrane. The protein localises to the endoplasmic reticulum membrane. It catalyses the reaction thymidine(out) + 2 Na(+)(out) = thymidine(in) + 2 Na(+)(in). It carries out the reaction cytidine(out) + 2 Na(+)(out) = cytidine(in) + 2 Na(+)(in). The enzyme catalyses uridine(out) + 2 Na(+)(out) = uridine(in) + 2 Na(+)(in). The catalysed reaction is adenosine(out) + 2 Na(+)(out) = adenosine(in) + 2 Na(+)(in). It catalyses the reaction guanosine(out) + 2 Na(+)(out) = guanosine(in) + 2 Na(+)(in). It carries out the reaction inosine(out) + 2 Na(+)(out) = inosine(in) + 2 Na(+)(in). Sodium-dependent, pyrimidine- and purine-selective. Involved in the homeostasis of endogenous nucleosides. Exhibits the transport characteristics of the nucleoside transport system cib or N3 subtype (N3/cib) (with marked transport of both thymidine and inosine). Employs a 2:1 sodium/nucleoside ratio. Transports uridine. Also able to transport gemcitabine, 3'-azido-3'-deoxythymidine (AZT), ribavirin and 3-deazauridine. In Homo sapiens (Human), this protein is Solute carrier family 28 member 3 (SLC28A3).